The chain runs to 1165 residues: Vacuolar segregation protein 7 (1165 aa).

Over 1–919 (MTEEDRKLTV…RKSPFVKVKN (919 aa)) the chain is Cytoplasmic. The segment at 118–147 (SVSSTNNNSNNALINHNPLSSHLSNPSSSL) is disordered. Ser164 bears the Phosphoserine mark. Disordered stretches follow at residues 215 to 241 (SNNT…LPSL), 274 to 423 (KAKN…SEKP), 461 to 497 (LIFP…SAPL), and 560 to 668 (EPPH…KRPL). A compositionally biased stretch (polar residues) spans 216 to 230 (NNTAPSTSNNIGSNT). Positions 334–345 (TTSTKTAPSTAP) are enriched in low complexity. A compositionally biased stretch (polar residues) spans 346–367 (LGSTDNTQALTASVSSSNADNH). Over residues 375 to 391 (SSNNNGNNSNSASNKTN) the composition is skewed to low complexity. Polar residues predominate over residues 393-412 (DIKNSNADLSASTSNNNAIN). Residues 413 to 423 (DDSHESNSEKP) show a composition bias toward basic and acidic residues. Composition is skewed to low complexity over residues 469–485 (QQQQ…QQQQ) and 562–571 (PHQLQQQQPP). A compositionally biased stretch (polar residues) spans 576–587 (SVDSYTSDNPDS). Over residues 599-613 (SLVSLSKVSPHLLSS) the composition is skewed to low complexity. A compositionally biased stretch (polar residues) spans 614–662 (TSSNGNTISCPNVATNSQELEPNNDISTKKSLSNSTLRHSSANRNSNYG). The chain crosses the membrane as a helical; Signal-anchor for type II membrane protein span at residues 920 to 940 (FLYLAFVISSLLMTGFILGFL). Residues 941-1165 (LATNKELQDV…KDSMVHPGKK (225 aa)) are Vacuolar-facing. Asn1020 and Asn1099 each carry an N-linked (GlcNAc...) asparagine glycan. Positions 1074–1121 (SPGSREAKHENDDDDDDDGDDGDDENNTNERQYKSKPNARDDKEDDTK) are disordered. Acidic residues predominate over residues 1085–1100 (DDDDDDDGDDGDDENN). Basic and acidic residues predominate over residues 1111-1121 (NARDDKEDDTK).

Component of the PI(3,5)P2 regulatory complex, composed of ATG18, FIG4, FAB1, VAC14 and VAC7. VAC14 nucleates the assembly of the complex and serves as a scaffold. In terms of processing, N-glycosylated.

The protein localises to the vacuole membrane. Its function is as follows. The PI(3,5)P2 regulatory complex regulates both the synthesis and turnover of phosphatidylinositol 3,5-bisphosphate (PtdIns(3,5)P2). Positively regulates FAB1 kinase activity. Major activator of FAB1 during hyperosmotic shock and can elevate levels of PtdIns(3,5)P2 in the absence of VAC14 and FIG4. Directly involved in vacuolar membrane scission. Required for normal vacuole acidification, inheritance and morphology. The protein is Vacuolar segregation protein 7 (VAC7) of Saccharomyces cerevisiae (strain ATCC 204508 / S288c) (Baker's yeast).